The chain runs to 185 residues: Elongation factor P (185 aa).

This sequence belongs to the elongation factor P family.

Its subcellular location is the cytoplasm. It participates in protein biosynthesis; polypeptide chain elongation. Involved in peptide bond synthesis. Stimulates efficient translation and peptide-bond synthesis on native or reconstituted 70S ribosomes in vitro. Probably functions indirectly by altering the affinity of the ribosome for aminoacyl-tRNA, thus increasing their reactivity as acceptors for peptidyl transferase. The protein is Elongation factor P of Metamycoplasma arthritidis (strain 158L3-1) (Mycoplasma arthritidis).